A 30-amino-acid chain; its full sequence is M-poneritoxin-Ng3a (30 aa).

Expressed by the venom gland.

It is found in the secreted. Functionally, shows a broad spectrum of activity against both Gram-positive and Gram-negative bacteria. Also has antimicrobial activity against S.cerevisiae. Has insecticidal and non-hemolytic activity. In Neoponera goeldii (Ponerine ant), this protein is M-poneritoxin-Ng3a.